The following is a 262-amino-acid chain: Nitrate transport protein NasD (262 aa).

Residues 5 to 239 form the ABC transporter domain; the sequence is IQVQGVSQRF…RPRNRVQLAD (235 aa). ATP is bound at residue 41-48; sequence GHSGCGKS.

The protein belongs to the ABC transporter superfamily.

The protein localises to the cell membrane. Its function is as follows. Probably part of a high-affinity binding-protein-dependent transport system for nitrate. Probably responsible for energy coupling to the transport system. The protein is Nitrate transport protein NasD (nasD) of Klebsiella oxytoca.